The chain runs to 261 residues: Phosphatidylglycerol--prolipoprotein diacylglyceryl transferase (261 aa).

The next 7 helical transmembrane spans lie at Val19–Tyr39, Leu56–Tyr76, Trp92–Phe112, Phe126–Gly146, Gln173–Ala193, Phe199–Phe219, and Gly227–Ile247. An a 1,2-diacyl-sn-glycero-3-phospho-(1'-sn-glycerol)-binding site is contributed by Arg139.

It belongs to the Lgt family.

The protein resides in the cell inner membrane. It carries out the reaction L-cysteinyl-[prolipoprotein] + a 1,2-diacyl-sn-glycero-3-phospho-(1'-sn-glycerol) = an S-1,2-diacyl-sn-glyceryl-L-cysteinyl-[prolipoprotein] + sn-glycerol 1-phosphate + H(+). The protein operates within protein modification; lipoprotein biosynthesis (diacylglyceryl transfer). In terms of biological role, catalyzes the transfer of the diacylglyceryl group from phosphatidylglycerol to the sulfhydryl group of the N-terminal cysteine of a prolipoprotein, the first step in the formation of mature lipoproteins. The protein is Phosphatidylglycerol--prolipoprotein diacylglyceryl transferase of Coxiella burnetii (strain CbuK_Q154) (Coxiella burnetii (strain Q154)).